The sequence spans 458 residues: MSVPHSSPSATPRFAAEVRTTGLLALPLVLGHVSTGLIGFVDNVIAGHHGTATLAAVTIGTSLLWLPMLVPIGTLISLTASVSQLVGAGREREIGPLFRQALWLSLGLGALMFGFLTAVPPLLPTFGIAPDIVPGATDFLHAVRWGGPALTFYFCMRYLSEGMHWTLPTMLLGFGGLLVLAPLGYVLTYGKFGFAEHGAQGLGMASAITMWVQAIAFALYLWRSRRFAHLELFTHLEGPRWRAIGELLRTGLPIGITVLMEGGLFIVTALLIGRLGSTEAAAHQIAINVSQLCFMIPMGVAEATTVRVGHAVGRGDPLGMRRAAWAGYAIVLGTQAVSASILLLGHDAIVGVYTNDAAVAALASVLLLFAATFQFPDGIQVLSAGALRGLKDTRVPMFLAMFSYWGLGMPLGAGLGLGLGWGPQGMWIGLILGLTAAAILMGLRFRQTSRRLTAGAAP.

The next 12 helical transmembrane spans lie at 21–43 (TGLLALPLVLGHVSTGLIGFVDN), 58–80 (TIGTSLLWLPMLVPIGTLISLTA), 101–123 (ALWLSLGLGALMFGFLTAVPPLL), 143–160 (VRWGGPALTFYFCMRYLS), 167–189 (LPTMLLGFGGLLVLAPLGYVLTY), 199–221 (AQGLGMASAITMWVQAIAFALYL), 251–273 (GLPIGITVLMEGGLFIVTALLIG), 288–310 (NVSQLCFMIPMGVAEATTVRVGH), 323–345 (AAWAGYAIVLGTQAVSASILLLG), 360–382 (AALASVLLLFAATFQFPDGIQVL), 395–417 (VPMFLAMFSYWGLGMPLGAGLGL), and 421–443 (WGPQGMWIGLILGLTAAAILMGL).

The protein belongs to the multi antimicrobial extrusion (MATE) (TC 2.A.66.1) family.

The protein resides in the cell inner membrane. In terms of biological role, multidrug efflux pump. This chain is Probable multidrug resistance protein NorM (norM), found in Xanthomonas campestris pv. campestris (strain ATCC 33913 / DSM 3586 / NCPPB 528 / LMG 568 / P 25).